Reading from the N-terminus, the 552-residue chain is MAELTIRPEEIRDALDAFVASYDPGTAAREEVGRVTDAGDGIAHVEGLPSVMANELLRFQDGTLGLAQNLDVRDIGVVVLGDYAGIEEGQEVHRTGEVLSVPVGDNFLGRVVDPLGAPIDGLGPIEAETRRALELQAPSVMQRQEVREPLQTGIKAIDAMIPVGRGQRQLIIGDRQTGKSAIAIDTIINQKANWESGDPKQQVRCIYVAIGQKGSTIAAVRRSLEEAGAMEYTTIVAAPASDPAGFKYLAPYTGSSIGQHWMYGGKHVLIVFDDLSKQAEAYRAVSLLLRRPPGREAYPGDVFYLHSRLLERCAKLSDELGGGSMTGLPFIETKGNDVSAYIPTNVISITDGQIFLQSDLFNANQRPAIDVGISVSRVGGAAQTKAIKGISGTLKLDLAQFRAMEAFAMFASDLDQASRNQLARGARLVELLKQPQYTPFSLEEQVVSIWAGTTGQLDSVEVSDISRFEREFLEYVKRNHAGVMQGIRETKQFSDGAKDELKKAVDAFKPQFSGGSKGSNVPKDVDAGATDADDISQEKITTRKGGATAARG.

ATP is bound at residue G173–S180. The segment at K509–G552 is disordered.

The protein belongs to the ATPase alpha/beta chains family. As to quaternary structure, F-type ATPases have 2 components, CF(1) - the catalytic core - and CF(0) - the membrane proton channel. CF(1) has five subunits: alpha(3), beta(3), gamma(1), delta(1), epsilon(1). CF(0) has three main subunits: a(1), b(2) and c(9-12). The alpha and beta chains form an alternating ring which encloses part of the gamma chain. CF(1) is attached to CF(0) by a central stalk formed by the gamma and epsilon chains, while a peripheral stalk is formed by the delta and b chains.

The protein localises to the cell membrane. It catalyses the reaction ATP + H2O + 4 H(+)(in) = ADP + phosphate + 5 H(+)(out). Its function is as follows. Produces ATP from ADP in the presence of a proton gradient across the membrane. The alpha chain is a regulatory subunit. This is ATP synthase subunit alpha from Kineococcus radiotolerans (strain ATCC BAA-149 / DSM 14245 / SRS30216).